We begin with the raw amino-acid sequence, 344 residues long: Heme A synthase (344 aa).

Helical transmembrane passes span 20 to 40 (IAWW…VGGL), 104 to 124 (RFLG…FVVT), 135 to 155 (LIFL…MVMS), 170 to 190 (AHLG…LDLL), 205 to 225 (AAAI…VAGI), 233 to 253 (TWPL…TPVW), 265 to 285 (FQHR…WWAA), 296 to 316 (WLAV…LWVV), and 317 to 337 (PIPL…VAVW). A heme-binding site is contributed by histidine 267. Residue histidine 324 coordinates heme.

This sequence belongs to the COX15/CtaA family. Type 2 subfamily. Interacts with CtaB. The cofactor is heme b.

Its subcellular location is the cell membrane. It catalyses the reaction Fe(II)-heme o + 2 A + H2O = Fe(II)-heme a + 2 AH2. The protein operates within porphyrin-containing compound metabolism; heme A biosynthesis; heme A from heme O: step 1/1. Its function is as follows. Catalyzes the conversion of heme O to heme A by two successive hydroxylations of the methyl group at C8. The first hydroxylation forms heme I, the second hydroxylation results in an unstable dihydroxymethyl group, which spontaneously dehydrates, resulting in the formyl group of heme A. The chain is Heme A synthase from Parvibaculum lavamentivorans (strain DS-1 / DSM 13023 / NCIMB 13966).